Reading from the N-terminus, the 84-residue chain is Putative membrane protein insertion efficiency factor (84 aa).

This sequence belongs to the UPF0161 family.

The protein resides in the cell membrane. In terms of biological role, could be involved in insertion of integral membrane proteins into the membrane. The polypeptide is Putative membrane protein insertion efficiency factor (Staphylococcus carnosus (strain TM300)).